The sequence spans 319 residues: MSDVVQDELSKKQTTRLNKLQKRLRREVGSAIADYNMIEEGDRVMCCLSGGKDSYAMLDILINLQQRAPVSFEIVAVNLDQKQPGFPEHVLPAYLETLGVPFHILEKDTYSIVKDKIPEGKTTCSLCSRLRRGTLYGFAQRIGATKIALGHHRDDIIETLFLNMFYGGKMKAMPPKLLSDDGANVVIRPLAYCREKDIAEYAELKQFPIIPCNLCGSQENLKRAAVKDMLKQWDRQHPGRIETIFTAMQNTAPSQGVDREQFDFVSLKQDPNAEFRGDVAEADLPAFDFMDTANSGHINLDDASKRQGTRIDVVSTFTP.

The PP-loop motif signature appears at 49–54 (SGGKDS). Positions 124, 127, and 215 each coordinate [4Fe-4S] cluster.

The protein belongs to the TtcA family. As to quaternary structure, homodimer. The cofactor is Mg(2+). It depends on [4Fe-4S] cluster as a cofactor.

The protein localises to the cytoplasm. It carries out the reaction cytidine(32) in tRNA + S-sulfanyl-L-cysteinyl-[cysteine desulfurase] + AH2 + ATP = 2-thiocytidine(32) in tRNA + L-cysteinyl-[cysteine desulfurase] + A + AMP + diphosphate + H(+). Its pathway is tRNA modification. Functionally, catalyzes the ATP-dependent 2-thiolation of cytidine in position 32 of tRNA, to form 2-thiocytidine (s(2)C32). The sulfur atoms are provided by the cysteine/cysteine desulfurase (IscS) system. This chain is tRNA-cytidine(32) 2-sulfurtransferase, found in Shewanella amazonensis (strain ATCC BAA-1098 / SB2B).